Consider the following 483-residue polypeptide: ATP synthase subunit beta (483 aa).

169–176 (GGAGVGKT) is an ATP binding site.

It belongs to the ATPase alpha/beta chains family. F-type ATPases have 2 components, CF(1) - the catalytic core - and CF(0) - the membrane proton channel. CF(1) has five subunits: alpha(3), beta(3), gamma(1), delta(1), epsilon(1). CF(0) has three main subunits: a(1), b(2) and c(9-12). The alpha and beta chains form an alternating ring which encloses part of the gamma chain. CF(1) is attached to CF(0) by a central stalk formed by the gamma and epsilon chains, while a peripheral stalk is formed by the delta and b chains.

It localises to the cell membrane. It carries out the reaction ATP + H2O + 4 H(+)(in) = ADP + phosphate + 5 H(+)(out). In terms of biological role, produces ATP from ADP in the presence of a proton gradient across the membrane. The catalytic sites are hosted primarily by the beta subunits. This chain is ATP synthase subunit beta, found in Rhodococcus opacus (strain B4).